A 601-amino-acid chain; its full sequence is Nuclear receptor subfamily 2 group C member 1 (601 aa).

A required for interaction with KAT2B region spans residues 1–179; it reads MATIEEIAHQ…RLQRCIAFGM (179 aa). Positions 111 to 186 form a DNA-binding region, nuclear receptor; that stretch reads FDLCVVCGDK…FGMKQDSVQC (76 aa). 2 consecutive NR C4-type zinc fingers follow at residues 114–134 and 150–169; these read CVVC…CEGC and CRGS…CQYC. A phosphoserine mark is found at Ser198 and Ser216. At Thr221 the chain carries Phosphothreonine. Phosphothreonine; by MAPK1 is present on Thr223. Residue Lys251 forms a Glycyl lysine isopeptide (Lys-Gly) (interchain with G-Cter in SUMO); alternate linkage. Lys251 participates in a covalent cross-link: Glycyl lysine isopeptide (Lys-Gly) (interchain with G-Cter in SUMO2); alternate. The region spanning 349–591 is the NR LBD domain; the sequence is GSVHLITGDS…SVIPHILKME (243 aa). Ser582 bears the Phosphoserine; by PKC mark. The tract at residues 585–601 is required for interaction with NRIP1; it reads PHILKMEPGQYSKTSSL. Lys589 participates in a covalent cross-link: Glycyl lysine isopeptide (Lys-Gly) (interchain with G-Cter in SUMO2).

It belongs to the nuclear hormone receptor family. NR2 subfamily. In terms of assembly, homodimer. Heterodimer; with NR2C2 which is required for chromatin remodeling and for binding to promoter regions such as globin DR1 repeats. Interacts with ESR1; the interaction prevents homodimerization of ESR1 and suppresses its transcriptional activity and cell growth. Interacts with NRIP1 (via its LXXLL motifs); the interaction provides corepressor activity. Interacts with HDAC3 (via the DNA-binding domain); the interaction recruits phosphorylated NR2C1 to PML bodies for sumoylation. Interacts with HDAC4 (via the DNA-binding domain). Interacts with PIAS1; the interaction is required for sumoylation of NR2C1. Interacts with UBE2I; the interaction is required for sumoylation of NR2C1. Interacts with KAT2B; the interaction acts as a corepressor of gene expression. Post-translationally, sumoylation requires both PIAS1 and UBE2I. Sumoylation appears to dissociate NR2C1 from the PML nuclear bodies. Enhances the interaction with NRIP1 but inhibits interaction with KAT2B. In proliferating cells, stimulation by all-trans retinoic acid, activation of MAPK1-mediated phosphorylation and recruitment to PML bodies with subsequent sumoylation, suppresses OCT4 expression. In terms of processing, phosphorylated on several serine and threonine residues. Phosphorylation on Thr-223, stimulated by all-trans retinoic acid (atRA) mediates PML location and sumoylation in proliferating cells which then modulates its association with effector molecules, KAT2B and NRIP1. Phosphorylation on Ser-582 by PKC is important for protein stability and function as activator of RARB.

It is found in the nucleus. The protein resides in the PML body. Functionally, orphan nuclear receptor. Binds the IR7 element in the promoter of its own gene in an autoregulatory negative feedback mechanism. Primarily repressor of a broad range of genes including ESR1 and RARB. Together with NR2C2, forms the core of the DRED (direct repeat erythroid-definitive) complex that represses embryonic and fetal globin transcription. Binds to hormone response elements (HREs) consisting of two 5'-AGGTCA-3' half site direct repeat consensus sequences. Also activator of OCT4 gene expression. Plays a fundamental role in early embryogenesis and regulates embryonic stem cell proliferation and differentiation. Mediator of retinoic acid-regulated preadipocyte proliferation. The polypeptide is Nuclear receptor subfamily 2 group C member 1 (NR2C1) (Pongo abelii (Sumatran orangutan)).